The chain runs to 465 residues: Cysteine--tRNA ligase (465 aa).

Cys-29 lines the Zn(2+) pocket. Residues 31–41 (PTVYNYIHIGN) carry the 'HIGH' region motif. Residues Cys-209, His-234, and Glu-238 each coordinate Zn(2+). The 'KMSKS' region signature appears at 266 to 270 (KMSKS). Lys-269 serves as a coordination point for ATP. Ser-270 is subject to Phosphoserine.

This sequence belongs to the class-I aminoacyl-tRNA synthetase family. In terms of assembly, monomer. It depends on Zn(2+) as a cofactor.

Its subcellular location is the cytoplasm. It catalyses the reaction tRNA(Cys) + L-cysteine + ATP = L-cysteinyl-tRNA(Cys) + AMP + diphosphate. The chain is Cysteine--tRNA ligase from Bacillus cereus (strain G9842).